A 92-amino-acid polypeptide reads, in one-letter code: Endoribonuclease VapD homolog (92 aa).

The protein belongs to the VapD ribonuclease family. As to quaternary structure, homodimer.

In terms of biological role, cleaves ssRNA, mostly between U:A. The protein is Endoribonuclease VapD homolog of Neisseria gonorrhoeae.